Consider the following 335-residue polypeptide: Glyceraldehyde-3-phosphate dehydrogenase 2 (335 aa).

NAD(+)-binding positions include 12-13, Asp35, Arg79, and Ser121; that span reads RI. Residues 152 to 154 and Thr183 each bind D-glyceraldehyde 3-phosphate; that span reads SCT. Cys153 acts as the Nucleophile in catalysis. Asn184 is an NAD(+) binding site. Residues Arg198, 211–212, and Arg234 contribute to the D-glyceraldehyde 3-phosphate site; that span reads TG. NAD(+) is bound at residue Asn316.

It belongs to the glyceraldehyde-3-phosphate dehydrogenase family. As to quaternary structure, homotetramer.

The protein localises to the cytoplasm. The enzyme catalyses D-glyceraldehyde 3-phosphate + phosphate + NAD(+) = (2R)-3-phospho-glyceroyl phosphate + NADH + H(+). It functions in the pathway carbohydrate degradation; glycolysis; pyruvate from D-glyceraldehyde 3-phosphate: step 1/5. Its activity is regulated as follows. Inhibited by pentalenolactone. Catalyzes the oxidative phosphorylation of glyceraldehyde 3-phosphate (G3P) to 1,3-bisphosphoglycerate (BPG) using the cofactor NAD. The first reaction step involves the formation of a hemiacetal intermediate between G3P and a cysteine residue, and this hemiacetal intermediate is then oxidized to a thioester, with concomitant reduction of NAD to NADH. The reduced NADH is then exchanged with the second NAD, and the thioester is attacked by a nucleophilic inorganic phosphate to produce BPG. The protein is Glyceraldehyde-3-phosphate dehydrogenase 2 (gap2) of Streptomyces avermitilis (strain ATCC 31267 / DSM 46492 / JCM 5070 / NBRC 14893 / NCIMB 12804 / NRRL 8165 / MA-4680).